We begin with the raw amino-acid sequence, 245 residues long: Phosphoribosylaminoimidazole-succinocarboxamide synthase (245 aa).

It belongs to the SAICAR synthetase family.

The enzyme catalyses 5-amino-1-(5-phospho-D-ribosyl)imidazole-4-carboxylate + L-aspartate + ATP = (2S)-2-[5-amino-1-(5-phospho-beta-D-ribosyl)imidazole-4-carboxamido]succinate + ADP + phosphate + 2 H(+). It participates in purine metabolism; IMP biosynthesis via de novo pathway; 5-amino-1-(5-phospho-D-ribosyl)imidazole-4-carboxamide from 5-amino-1-(5-phospho-D-ribosyl)imidazole-4-carboxylate: step 1/2. The polypeptide is Phosphoribosylaminoimidazole-succinocarboxamide synthase (Nostoc punctiforme (strain ATCC 29133 / PCC 73102)).